The following is a 288-amino-acid chain: MAAKIIDGKTIAQQVRSEVAQKVQARVAAGLRAPGLAVVLVGSNPASQIYVASKRKACDEVGFVSRSYDLPETTSEAELLALIDTLNADNTIDGILVQLPLPAGIDNVKVLERIAPDKDVDGFHPYNVGRLCQRAPRLRPCTPRGIVTLLERYNIDTYGLNAVVIGASNIVGRPMSMELLLAGCTTTVTHRFTKDLRHHVEHADLLIVAVGKPGFIPGEWIKEGAIVIDVGINRLENGKIVGDVVFDEAAARASYITPVPGGVGPMTVATLIENTLQACIEYHDPQGK.

Residues 166–168 and Ile232 each bind NADP(+); that span reads GAS.

Belongs to the tetrahydrofolate dehydrogenase/cyclohydrolase family. Homodimer.

It catalyses the reaction (6R)-5,10-methylene-5,6,7,8-tetrahydrofolate + NADP(+) = (6R)-5,10-methenyltetrahydrofolate + NADPH. The enzyme catalyses (6R)-5,10-methenyltetrahydrofolate + H2O = (6R)-10-formyltetrahydrofolate + H(+). It functions in the pathway one-carbon metabolism; tetrahydrofolate interconversion. Functionally, catalyzes the oxidation of 5,10-methylenetetrahydrofolate to 5,10-methenyltetrahydrofolate and then the hydrolysis of 5,10-methenyltetrahydrofolate to 10-formyltetrahydrofolate. The sequence is that of Bifunctional protein FolD from Salmonella enteritidis PT4 (strain P125109).